The following is a 993-amino-acid chain: uncharacterized protein (993 aa).

An N-terminal signal peptide occupies residues 1-24 (MLLFKFNFTTAFLFTILAFAQARS). Residues Asn-7, Asn-44, Asn-89, Asn-121, Asn-138, Asn-161, Asn-169, Asn-232, Asn-361, Asn-386, Asn-393, Asn-423, Asn-447, Asn-480, and Asn-488 are each glycosylated (N-linked (GlcNAc...) asparagine). The active site involves Glu-504. N-linked (GlcNAc...) asparagine glycans are attached at residues Asn-545, Asn-548, and Asn-614. Asp-672 (proton donor) is an active-site residue. N-linked (GlcNAc...) asparagine glycosylation is found at Asn-673, Asn-814, Asn-826, Asn-835, Asn-846, Asn-910, Asn-940, and Asn-987.

The protein belongs to the glycosyl hydrolase 31 family.

This is an uncharacterized protein from Schizosaccharomyces pombe (strain 972 / ATCC 24843) (Fission yeast).